A 156-amino-acid polypeptide reads, in one-letter code: ATP synthase subunit b 1 (156 aa).

Residues 7–27 (LFLQAIVFAILVWFTMKFVWP) form a helical membrane-spanning segment.

This sequence belongs to the ATPase B chain family. F-type ATPases have 2 components, F(1) - the catalytic core - and F(0) - the membrane proton channel. F(1) has five subunits: alpha(3), beta(3), gamma(1), delta(1), epsilon(1). F(0) has three main subunits: a(1), b(2) and c(10-14). The alpha and beta chains form an alternating ring which encloses part of the gamma chain. F(1) is attached to F(0) by a central stalk formed by the gamma and epsilon chains, while a peripheral stalk is formed by the delta and b chains.

Its subcellular location is the cell inner membrane. Functionally, f(1)F(0) ATP synthase produces ATP from ADP in the presence of a proton or sodium gradient. F-type ATPases consist of two structural domains, F(1) containing the extramembraneous catalytic core and F(0) containing the membrane proton channel, linked together by a central stalk and a peripheral stalk. During catalysis, ATP synthesis in the catalytic domain of F(1) is coupled via a rotary mechanism of the central stalk subunits to proton translocation. In terms of biological role, component of the F(0) channel, it forms part of the peripheral stalk, linking F(1) to F(0). This Albidiferax ferrireducens (strain ATCC BAA-621 / DSM 15236 / T118) (Rhodoferax ferrireducens) protein is ATP synthase subunit b 1.